The chain runs to 341 residues: Flagellar P-ring protein (341 aa).

An N-terminal signal peptide occupies residues 1–19 (MKQVFLWLIFVLAFHKLLA).

Belongs to the FlgI family. In terms of assembly, the basal body constitutes a major portion of the flagellar organelle and consists of four rings (L,P,S, and M) mounted on a central rod.

The protein resides in the periplasm. It is found in the bacterial flagellum basal body. Functionally, assembles around the rod to form the L-ring and probably protects the motor/basal body from shearing forces during rotation. The sequence is that of Flagellar P-ring protein from Helicobacter acinonychis (strain Sheeba).